The following is a 152-amino-acid chain: Transcriptional regulator MraZ (152 aa).

SpoVT-AbrB domains are found at residues 5 to 52 (ATLV…PLPE) and 81 to 124 (ASEC…DETT).

It belongs to the MraZ family. Forms oligomers.

The protein resides in the cytoplasm. Its subcellular location is the nucleoid. In terms of biological role, negatively regulates its own expression and that of the subsequent genes in the proximal part of the division and cell wall (dcw) gene cluster. Acts by binding directly to DNA. May also regulate the expression of genes outside the dcw cluster. The protein is Transcriptional regulator MraZ of Salmonella typhi.